The chain runs to 259 residues: Methanethiol S-methyltransferase 2 (259 aa).

Transmembrane regions (helical) follow at residues 5-25, 46-66, 88-108, 115-135, and 182-202; these read LAILLYAIVSYAAFTVSFLYA, LGEAILVNLLLMSLFAIQHSV, TYVLLSSLILLLLFWQWRPIP, SGIAAWLLIGVHWLGWLIAFA, and FLLAFWATPAMTAGHLLFALA.

The protein belongs to the nurim family.

The protein resides in the membrane. It carries out the reaction methanethiol + S-adenosyl-L-methionine = dimethyl sulfide + S-adenosyl-L-homocysteine + H(+). Catalyzes the methylation of methanethiol (MeSH) to yield dimethylsulphide (DMS). This Bradyrhizobium diazoefficiens (strain JCM 10833 / BCRC 13528 / IAM 13628 / NBRC 14792 / USDA 110) protein is Methanethiol S-methyltransferase 2.